The following is a 126-amino-acid chain: Apolipoprotein C-IV (126 aa).

The N-terminal stretch at 1–27 (MSLLRHRLQALPSLCLCVLVLACIGAC) is a signal peptide.

The protein belongs to the apolipoprotein C4 family.

It localises to the secreted. In terms of biological role, may participate in lipoprotein metabolism. The protein is Apolipoprotein C-IV (APOC4) of Aotus nancymaae (Ma's night monkey).